The sequence spans 691 residues: DNA ligase (691 aa).

NAD(+) contacts are provided by residues 41-45 (DAEYD), 90-91 (SL), and Glu130. Residue Lys132 is the N6-AMP-lysine intermediate of the active site. NAD(+)-binding residues include Arg153, Glu190, Lys307, and Lys331. Residues Cys425, Cys428, Cys443, and Cys449 each contribute to the Zn(2+) site. Residues 610 to 691 (APQGVLAGKT…MHTLLEGHAR (82 aa)) enclose the BRCT domain.

This sequence belongs to the NAD-dependent DNA ligase family. LigA subfamily. It depends on Mg(2+) as a cofactor. Mn(2+) is required as a cofactor.

The catalysed reaction is NAD(+) + (deoxyribonucleotide)n-3'-hydroxyl + 5'-phospho-(deoxyribonucleotide)m = (deoxyribonucleotide)n+m + AMP + beta-nicotinamide D-nucleotide.. Its function is as follows. DNA ligase that catalyzes the formation of phosphodiester linkages between 5'-phosphoryl and 3'-hydroxyl groups in double-stranded DNA using NAD as a coenzyme and as the energy source for the reaction. It is essential for DNA replication and repair of damaged DNA. The chain is DNA ligase from Burkholderia pseudomallei (strain 1710b).